The primary structure comprises 859 residues: Pre-mRNA-splicing factor SYF1 (859 aa).

HAT repeat units lie at residues 17-49 (NIRN…YWKE), 52-84 (RTDK…WEST), 88-108 (VETS…VRDC), 123-157 (YDLA…FVEE), 177-219 (DEAE…ERYL), 238-271 (RDNI…FELN), 427-459 (VYSE…LYWR), 461-482 (NAIS…PYIE), 520-554 (ILLE…YLEA), 599-633 (YEVM…VATS), 639-675 (LSPE…FEER), 685-718 (EILR…KAES), 720-754 (LGPS…FESS), and 756-790 (GETI…FELK).

Belongs to the crooked-neck family. In terms of assembly, belongs to the NTC complex (or PRP19-associated complex), composed of at least CEF1, CLF1, ISY1, NTC20, SNT309, SYF1, SYF2, and PRP19. The NTC complex associates with the spliceosome after the release of the U1 and U4 snRNAs and forms the CWC spliceosome subcomplex (or CEF1-associated complex) reminiscent of a late-stage spliceosome composed also of the U2, U5 and U6 snRNAs and at least BUD13, BUD31, BRR2, CDC40, CUS1, CWC2, CWC15, CWC21, CWC22, CWC23, CWC24, CWC25, CWC27, ECM2, HSH155, IST3, LEA1, MSL1, PRP8, PRP9, PRP11, PRP21, PRP22, PRP45, PRP46, SLU7, SMB1, SMD1, SMD2, SMD3, SMX2, SMX3, SNU114, SPP2, RSE1 and YJU2. Interacts with CEF1, CLF1, ISY1, NTC20, PRP22, PRP46 and SYF2.

The protein localises to the nucleus. In terms of biological role, involved in pre-mRNA splicing and cell cycle control. As a component of the NTC complex (or PRP19-associated complex), associates to the spliceosome to mediate conformational rearrangement or to stabilize the structure of the spliceosome after U4 snRNA dissociation, which leads to spliceosome maturation. The chain is Pre-mRNA-splicing factor SYF1 (SYF1) from Saccharomyces cerevisiae (strain ATCC 204508 / S288c) (Baker's yeast).